The sequence spans 486 residues: MRSYKSSITDENELTKQRLRAKSIANLSSNHTTAGQPSTSSQHREALTDLTSQENKNHPRVKLTQTNTNHHRNSSSSSNKIQIYQQIEQKKTDIHQFKKPRLEKVLLNDDDDETDDEFDDEEDKENRYHDLELNEDDSKHQLISEAFETIDDRGISEGENDTAQEARERLEEETQSHTQDMRSIYGVHVPMQPMWNNAIINELKYVIQKYSRNTLDENDEDTYDTTMVAEYSPEIFNYLHELENKFTPDPNYMDFQDDLKWEMRAVLIDWVVQVHARFNLFSETLYLTVNYIDRFLSKRRVSLSRFQLVGAVALFIAAKYEEINCPTVQEIAYMADNAYSIDEFLKAERFMIDVLEFDLGWPGPMSFLRRISKADDYDYETRTLAKYFLEITIMDSKFVASPPSWLAAGAHYISRILLGRGEWTELHVFYSGYTEKQLQPLADVLLENCRHAEINHKAIFEKYKERRYRKSSLFVQEYFRHIMSQS.

Disordered regions lie at residues 1–80 (MRSY…SSNK) and 105–126 (VLLN…DKEN). Positions 25-41 (ANLSSNHTTAGQPSTSS) are enriched in polar residues. The segment covering 108–123 (NDDDDETDDEFDDEED) has biased composition (acidic residues). The stretch at 122–184 (EDKENRYHDL…QSHTQDMRSI (63 aa)) forms a coiled coil. A Cyclin N-terminal domain is found at 234–359 (EIFNYLHELE…FMIDVLEFDL (126 aa)).

It belongs to the cyclin family. Cyclin AB subfamily. Interacts with IQG1.

Functionally, 2/mitotic-specific cyclin essential for the control of the cell cycle at the G2/M (mitosis) transition. G2/M cyclins accumulate steadily during G2 and are abruptly destroyed at mitosis. Degradation is necessary for the cell to exit from mitosis. Plays a role in morphogenesis by negatively regulating polarized growth. Through binding to CDC28 regulates cytokinesis, partly by phosphorylation of the actomyosin ring component IQG1. The chain is G2/mitotic-specific cyclin-4 (CLB4) from Candida albicans (strain SC5314 / ATCC MYA-2876) (Yeast).